A 185-amino-acid chain; its full sequence is Ribosome-recycling factor (185 aa).

It belongs to the RRF family.

The protein resides in the cytoplasm. Functionally, responsible for the release of ribosomes from messenger RNA at the termination of protein biosynthesis. May increase the efficiency of translation by recycling ribosomes from one round of translation to another. This is Ribosome-recycling factor from Campylobacter jejuni subsp. doylei (strain ATCC BAA-1458 / RM4099 / 269.97).